We begin with the raw amino-acid sequence, 287 residues long: ATP synthase gamma chain (287 aa).

Belongs to the ATPase gamma chain family. As to quaternary structure, F-type ATPases have 2 components, CF(1) - the catalytic core - and CF(0) - the membrane proton channel. CF(1) has five subunits: alpha(3), beta(3), gamma(1), delta(1), epsilon(1). CF(0) has three main subunits: a, b and c.

The protein localises to the cell inner membrane. Functionally, produces ATP from ADP in the presence of a proton gradient across the membrane. The gamma chain is believed to be important in regulating ATPase activity and the flow of protons through the CF(0) complex. The chain is ATP synthase gamma chain from Enterobacter sp. (strain 638).